Consider the following 182-residue polypeptide: Isopentenyl-diphosphate Delta-isomerase (182 aa).

Residues histidine 25 and histidine 32 each contribute to the Mn(2+) site. A Nudix hydrolase domain is found at 30–164; sequence LLHLAFSSWL…PWAFSPWMVM (135 aa). Cysteine 67 is a catalytic residue. Histidine 69 is a Mn(2+) binding site. Glutamate 87 is a binding site for Mg(2+). Residues glutamate 114 and glutamate 116 each coordinate Mn(2+). Glutamate 116 is an active-site residue.

This sequence belongs to the IPP isomerase type 1 family. In terms of assembly, homodimer. Mg(2+) serves as cofactor. It depends on Mn(2+) as a cofactor.

It is found in the cytoplasm. It catalyses the reaction isopentenyl diphosphate = dimethylallyl diphosphate. It functions in the pathway isoprenoid biosynthesis; dimethylallyl diphosphate biosynthesis; dimethylallyl diphosphate from isopentenyl diphosphate: step 1/1. Its function is as follows. Catalyzes the 1,3-allylic rearrangement of the homoallylic substrate isopentenyl (IPP) to its highly electrophilic allylic isomer, dimethylallyl diphosphate (DMAPP). The polypeptide is Isopentenyl-diphosphate Delta-isomerase (Escherichia coli O127:H6 (strain E2348/69 / EPEC)).